The sequence spans 275 residues: tRNA (guanine-N(7)-)-methyltransferase (275 aa).

The disordered stretch occupies residues 1–73 (MRHHGRMHAR…GGQQDTWERL (73 aa)). The segment covering 46–59 (AHRHRRVTSFRSRR) has biased composition (basic residues). Positions 107, 132, 159, and 182 each coordinate S-adenosyl-L-methionine. Residue D182 is part of the active site. Substrate-binding positions include K186, D218, and 254–257 (TKYE).

It belongs to the class I-like SAM-binding methyltransferase superfamily. TrmB family.

The enzyme catalyses guanosine(46) in tRNA + S-adenosyl-L-methionine = N(7)-methylguanosine(46) in tRNA + S-adenosyl-L-homocysteine. It functions in the pathway tRNA modification; N(7)-methylguanine-tRNA biosynthesis. In terms of biological role, catalyzes the formation of N(7)-methylguanine at position 46 (m7G46) in tRNA. This is tRNA (guanine-N(7)-)-methyltransferase from Mycobacterium sp. (strain KMS).